Here is a 193-residue protein sequence, read N- to C-terminus: 7-methyl-GTP pyrophosphatase (193 aa).

Aspartate 69 acts as the Proton acceptor in catalysis.

Belongs to the Maf family. YceF subfamily. The cofactor is a divalent metal cation.

The protein resides in the cytoplasm. The catalysed reaction is N(7)-methyl-GTP + H2O = N(7)-methyl-GMP + diphosphate + H(+). Nucleoside triphosphate pyrophosphatase that hydrolyzes 7-methyl-GTP (m(7)GTP). May have a dual role in cell division arrest and in preventing the incorporation of modified nucleotides into cellular nucleic acids. This Chromohalobacter salexigens (strain ATCC BAA-138 / DSM 3043 / CIP 106854 / NCIMB 13768 / 1H11) protein is 7-methyl-GTP pyrophosphatase.